We begin with the raw amino-acid sequence, 150 residues long: uncharacterized protein (150 aa).

One can recognise an HTH asnC-type domain in the interval 5–66; it reads LDKVDRRLLE…KPNYKKLNLG (62 aa). Residues 24–43 constitute a DNA-binding region (H-T-H motif); the sequence is IATLSKKLGIPRTTVHYRIK.

This is an uncharacterized protein from Pyrococcus horikoshii (strain ATCC 700860 / DSM 12428 / JCM 9974 / NBRC 100139 / OT-3).